Reading from the N-terminus, the 251-residue chain is 3-dehydroquinate dehydratase (251 aa).

3-dehydroquinate contacts are provided by residues 47–49 (EWR) and R83. Residue H144 is the Proton donor/acceptor of the active site. Catalysis depends on K171, which acts as the Schiff-base intermediate with substrate. Positions 214, 233, and 237 each coordinate 3-dehydroquinate.

Belongs to the type-I 3-dehydroquinase family. As to quaternary structure, homodimer.

The catalysed reaction is 3-dehydroquinate = 3-dehydroshikimate + H2O. Its pathway is metabolic intermediate biosynthesis; chorismate biosynthesis; chorismate from D-erythrose 4-phosphate and phosphoenolpyruvate: step 3/7. Functionally, involved in the third step of the chorismate pathway, which leads to the biosynthesis of aromatic amino acids. Catalyzes the cis-dehydration of 3-dehydroquinate (DHQ) and introduces the first double bond of the aromatic ring to yield 3-dehydroshikimate. This chain is 3-dehydroquinate dehydratase, found in Klebsiella pneumoniae subsp. pneumoniae (strain ATCC 700721 / MGH 78578).